An 89-amino-acid chain; its full sequence is Small ribosomal subunit protein uS15 (89 aa).

Belongs to the universal ribosomal protein uS15 family. As to quaternary structure, part of the 30S ribosomal subunit. Forms a bridge to the 50S subunit in the 70S ribosome, contacting the 23S rRNA.

In terms of biological role, one of the primary rRNA binding proteins, it binds directly to 16S rRNA where it helps nucleate assembly of the platform of the 30S subunit by binding and bridging several RNA helices of the 16S rRNA. Its function is as follows. Forms an intersubunit bridge (bridge B4) with the 23S rRNA of the 50S subunit in the ribosome. The sequence is that of Small ribosomal subunit protein uS15 from Oenococcus oeni (strain ATCC BAA-331 / PSU-1).